A 290-amino-acid polypeptide reads, in one-letter code: ATP synthase gamma chain (290 aa).

It belongs to the ATPase gamma chain family. F-type ATPases have 2 components, CF(1) - the catalytic core - and CF(0) - the membrane proton channel. CF(1) has five subunits: alpha(3), beta(3), gamma(1), delta(1), epsilon(1). CF(0) has three main subunits: a, b and c.

It is found in the cell inner membrane. Its function is as follows. Produces ATP from ADP in the presence of a proton gradient across the membrane. The gamma chain is believed to be important in regulating ATPase activity and the flow of protons through the CF(0) complex. The chain is ATP synthase gamma chain from Gemmatimonas aurantiaca (strain DSM 14586 / JCM 11422 / NBRC 100505 / T-27).